Consider the following 115-residue polypeptide: NADH-ubiquinone oxidoreductase chain 3 (115 aa).

A run of 3 helical transmembrane segments spans residues 3–23 (LLMA…IAFW), 55–75 (FFLV…LLPL), and 84–104 (LSAM…GLMY).

The protein belongs to the complex I subunit 3 family. As to quaternary structure, core subunit of respiratory chain NADH dehydrogenase (Complex I) which is composed of 45 different subunits. Interacts with TMEM186. Interacts with TMEM242.

Its subcellular location is the mitochondrion inner membrane. The enzyme catalyses a ubiquinone + NADH + 5 H(+)(in) = a ubiquinol + NAD(+) + 4 H(+)(out). Core subunit of the mitochondrial membrane respiratory chain NADH dehydrogenase (Complex I) which catalyzes electron transfer from NADH through the respiratory chain, using ubiquinone as an electron acceptor. Essential for the catalytic activity of complex I. The sequence is that of NADH-ubiquinone oxidoreductase chain 3 from Sigmodon ochrognathus (Yellow-nosed cotton rat).